The sequence spans 299 residues: Ribosomal protein L11 methyltransferase (299 aa).

Positions 139, 163, 185, and 232 each coordinate S-adenosyl-L-methionine.

This sequence belongs to the methyltransferase superfamily. PrmA family.

The protein localises to the cytoplasm. It catalyses the reaction L-lysyl-[protein] + 3 S-adenosyl-L-methionine = N(6),N(6),N(6)-trimethyl-L-lysyl-[protein] + 3 S-adenosyl-L-homocysteine + 3 H(+). Methylates ribosomal protein L11. This chain is Ribosomal protein L11 methyltransferase, found in Crocosphaera subtropica (strain ATCC 51142 / BH68) (Cyanothece sp. (strain ATCC 51142)).